A 660-amino-acid chain; its full sequence is MRLSVSLGLASLWTAIGATALNVSQTNSSITLANDRLTAIFSNAGKVVDLYLDGQDLLGPASGSTGVGPYLDCYCTPKGFYTAGSTTPRMEVVQGTDATGTQYAGVILNDTYTPTGQQFQQYWFLRDGETGLHMFSRLAYYNETTPFLRNLQEFRTLFRPNTDLWTHLTSSELQTAPLPSDEAVGKQVVVQDATWRFNNTPNDAYYTQFSEYFTKYTFSNAWRDNNVHGLYADGSTSNGTTFGAWLVMNTKDTYYGGPLHSDLTVDGIVYNYIVSNHHGEGTPNITNGFDRTFGPQFYLFNGGGSSSLNELRSEAESLADPSWNVEFYDSIAKHVVGYVPSSKRGSVQGQIKLPRGATRPIAILTVDGQYFQDNSVDPRSYQYWVEMDANGKFQLDHVVEGKYRLTVYADGIFGDYVRDGVQVRGRKTTRINDSWQPESAGVEVWRLGTPDKSSGEFLHGVARDPTHPLHPPEYLIYWGAYDWQQDFPNGVNYTIGSSDPATDFNTVHWSVFGPTPDNPDVEYDTTHDWAINFSLTKKQLQKRKTATLTIQLAGAKTASGNTDVYKPDEPYTNLALESYINQQEEPLTMLIGFNQSSSCIVRSAVSCYQVRSRMTFPADWLQVGSNTLTLHLPRNATDVEDAILPGTVYVQYDALRLELS.

Positions Met1–Ala20 are cleaved as a signal peptide. N-linked (GlcNAc...) asparagine glycosylation is found at Asn22, Asn27, Asn109, Asn142, Asn238, Asn284, Asn432, Asn492, Asn532, Asn594, and Asn635.

It belongs to the polysaccharide lyase 4 family.

It is found in the secreted. It catalyses the reaction Endotype eliminative cleavage of L-alpha-rhamnopyranosyl-(1-&gt;4)-alpha-D-galactopyranosyluronic acid bonds of rhamnogalacturonan I domains in ramified hairy regions of pectin leaving L-rhamnopyranose at the reducing end and 4-deoxy-4,5-unsaturated D-galactopyranosyluronic acid at the non-reducing end.. Pectinolytic enzymes consist of four classes of enzymes: pectin lyase, polygalacturonase, pectin methylesterase and rhamnogalacturonase. Degrades the rhamnogalacturonan I (RG-I) backbone of pectin. In Aspergillus terreus (strain NIH 2624 / FGSC A1156), this protein is Probable rhamnogalacturonate lyase B (rglB).